A 649-amino-acid chain; its full sequence is 1-deoxy-D-xylulose-5-phosphate synthase (649 aa).

Residues His73 and 114–116 (SHA) each bind thiamine diphosphate. Residue Asp145 participates in Mg(2+) binding. Thiamine diphosphate-binding positions include 146–147 (GA), Asn175, Tyr286, and Glu367. Asn175 serves as a coordination point for Mg(2+).

This sequence belongs to the transketolase family. DXPS subfamily. As to quaternary structure, homodimer. The cofactor is Mg(2+). Thiamine diphosphate serves as cofactor.

It catalyses the reaction D-glyceraldehyde 3-phosphate + pyruvate + H(+) = 1-deoxy-D-xylulose 5-phosphate + CO2. It participates in metabolic intermediate biosynthesis; 1-deoxy-D-xylulose 5-phosphate biosynthesis; 1-deoxy-D-xylulose 5-phosphate from D-glyceraldehyde 3-phosphate and pyruvate: step 1/1. Its function is as follows. Catalyzes the acyloin condensation reaction between C atoms 2 and 3 of pyruvate and glyceraldehyde 3-phosphate to yield 1-deoxy-D-xylulose-5-phosphate (DXP). This Rhodococcus jostii (strain RHA1) protein is 1-deoxy-D-xylulose-5-phosphate synthase.